A 297-amino-acid chain; its full sequence is Large ribosomal subunit protein uL18 (297 aa).

At Gly-2 the chain carries N-acetylglycine. 2 positions are modified to N6-acetyllysine: Lys-5 and Lys-48. Ser-185 bears the Phosphoserine mark. An N6-acetyllysine; alternate modification is found at Lys-220. Residue Lys-220 forms a Glycyl lysine isopeptide (Lys-Gly) (interchain with G-Cter in SUMO1); alternate linkage. Residue Lys-220 forms a Glycyl lysine isopeptide (Lys-Gly) (interchain with G-Cter in SUMO2); alternate linkage. Thr-232 is modified (phosphothreonine). Residues 253–297 (YEKKPKREVKKKRWNRPKMSLAQKKDRVAQKKASFLRAQERAAES) are disordered. Basic residues predominate over residues 258–268 (KREVKKKRWNR). A Phosphoserine modification is found at Ser-272.

The protein belongs to the universal ribosomal protein uL18 family. In terms of assembly, component of the large ribosomal subunit (LSU). Part of the 5S RNP complex, which is a LSU subcomplex composed of the 5S RNA, RPL5 and RPL11. Component of a hexameric 5S RNP precursor complex, composed of 5S RNA, RRS1, RPF2/BXDC1, RPL5, RPL11 and HEATR3; this complex acts as a precursor for ribosome assembly. Interacts with NVL in an ATP-dependent manner. Interacts with RRP1B. Interacts with IPO5, IPO7 and KPNB1; these interactions may be involved in RPL5 nuclear import for the assembly of ribosomal subunits.

Its subcellular location is the cytoplasm. The protein resides in the nucleus. It is found in the nucleolus. Component of the ribosome, a large ribonucleoprotein complex responsible for the synthesis of proteins in the cell. The small ribosomal subunit (SSU) binds messenger RNAs (mRNAs) and translates the encoded message by selecting cognate aminoacyl-transfer RNA (tRNA) molecules. The large subunit (LSU) contains the ribosomal catalytic site termed the peptidyl transferase center (PTC), which catalyzes the formation of peptide bonds, thereby polymerizing the amino acids delivered by tRNAs into a polypeptide chain. The nascent polypeptides leave the ribosome through a tunnel in the LSU and interact with protein factors that function in enzymatic processing, targeting, and the membrane insertion of nascent chains at the exit of the ribosomal tunnel. As part of the 5S RNP/5S ribonucleoprotein particle it is an essential component of the LSU, required for its formation and the maturation of rRNAs. It also couples ribosome biogenesis to p53/TP53 activation. As part of the 5S RNP it accumulates in the nucleoplasm and inhibits MDM2, when ribosome biogenesis is perturbed, mediating the stabilization and the activation of TP53. In Mus musculus (Mouse), this protein is Large ribosomal subunit protein uL18 (Rpl5).